A 170-amino-acid chain; its full sequence is Large ribosomal subunit protein uL11 (170 aa).

This sequence belongs to the universal ribosomal protein uL11 family. As to quaternary structure, part of the ribosomal stalk of the 50S ribosomal subunit. Interacts with L10 and the large rRNA to form the base of the stalk. L10 forms an elongated spine to which L12 dimers bind in a sequential fashion forming a multimeric L10(L12)X complex.

In terms of biological role, forms part of the ribosomal stalk which helps the ribosome interact with GTP-bound translation factors. This chain is Large ribosomal subunit protein uL11, found in Saccharolobus solfataricus (strain ATCC 35092 / DSM 1617 / JCM 11322 / P2) (Sulfolobus solfataricus).